The primary structure comprises 255 residues: Folate receptor beta (255 aa).

The N-terminal stretch at 1–16 (MVWKWMPLLLLLVCVA) is a signal peptide. Cystine bridges form between cysteine 31–cysteine 59, cysteine 51–cysteine 99, cysteine 60–cysteine 103, cysteine 83–cysteine 169, cysteine 90–cysteine 140, cysteine 129–cysteine 203, cysteine 133–cysteine 183, and cysteine 146–cysteine 163. Folate-binding residues include aspartate 97 and tyrosine 101. N-linked (GlcNAc...) asparagine glycosylation is present at asparagine 115. Folate contacts are provided by residues 118–122 (WRKER), 151–156 (HRGWDW), and serine 190. A glycan (N-linked (GlcNAc...) asparagine) is linked at asparagine 195. Asparagine 230 carries the GPI-anchor amidated asparagine lipid modification. Residues 231 to 255 (AGEMLHGTGGLLLSLALMLQLWLLG) constitute a propeptide, removed in mature form.

The protein belongs to the folate receptor family. Post-translationally, N-glycosylated. Expressed in placenta and hematopoietic cells. Expression is increased in malignant tissues.

The protein resides in the cell membrane. The protein localises to the secreted. Its function is as follows. Binds to folate and reduced folic acid derivatives and mediates delivery of 5-methyltetrahydrofolate and folate analogs into the interior of cells. Has high affinity for folate and folic acid analogs at neutral pH. Exposure to slightly acidic pH after receptor endocytosis triggers a conformation change that strongly reduces its affinity for folates and mediates their release. In Homo sapiens (Human), this protein is Folate receptor beta (FOLR2).